The sequence spans 277 residues: (-)-trans-carveol dehydrogenase (277 aa).

Position 10–32 (10–32) interacts with NAD(+); the sequence is LITGAARGQGRSHAIKLAEEGAD. Serine 156 lines the substrate pocket. Tyrosine 169 (proton acceptor) is an active-site residue.

This sequence belongs to the short-chain dehydrogenases/reductases (SDR) family. Homotetramer.

It carries out the reaction (1S,5R)-carveol + NAD(+) = (R)-carvone + NADH + H(+). It catalyses the reaction (1S,5S)-carveol + NAD(+) = (S)-carvone + NADH + H(+). Its pathway is terpene metabolism; limonene degradation. With respect to regulation, competitively inhibited by the product (S)- or (R)-carvone. Its function is as follows. Catalyzes the oxidation of carveol to carvone, with a strong stereoselectivity since it efficiently converts only the (6S)-stereoisomers, of which (-)-(4R,6S)-trans-carveol is the better substrate. Displays a broad substrate specificity with a preference for substituted cyclohexanols, and does not catalyze the oxidation of primary or short chain aliphatic secondary alcohols. Is also able, albeit more slowly, to oxidize limonene-1,2-diol into 1-hydroxy-2-oxolimonene. This chain is (-)-trans-carveol dehydrogenase (limC), found in Rhodococcus erythropolis (Arthrobacter picolinophilus).